Here is a 526-residue protein sequence, read N- to C-terminus: UDP-N-acetylmuramoyl-L-alanyl-D-glutamate--2,6-diaminopimelate ligase (526 aa).

UDP-N-acetyl-alpha-D-muramoyl-L-alanyl-D-glutamate is bound by residues L48 and S50. 136-142 is a binding site for ATP; sequence GTSGKTT. Residues 178-179, S205, and R213 each bind UDP-N-acetyl-alpha-D-muramoyl-L-alanyl-D-glutamate; that span reads TT. K245 is subject to N6-carboxylysine. Meso-2,6-diaminopimelate is bound by residues R408, 432 to 435, G490, and E494; that span reads DNPR. Residues 432-435 carry the Meso-diaminopimelate recognition motif motif; that stretch reads DNPR.

This sequence belongs to the MurCDEF family. MurE subfamily. The cofactor is Mg(2+). Carboxylation is probably crucial for Mg(2+) binding and, consequently, for the gamma-phosphate positioning of ATP.

The protein localises to the cytoplasm. The catalysed reaction is UDP-N-acetyl-alpha-D-muramoyl-L-alanyl-D-glutamate + meso-2,6-diaminopimelate + ATP = UDP-N-acetyl-alpha-D-muramoyl-L-alanyl-gamma-D-glutamyl-meso-2,6-diaminopimelate + ADP + phosphate + H(+). It functions in the pathway cell wall biogenesis; peptidoglycan biosynthesis. Functionally, catalyzes the addition of meso-diaminopimelic acid to the nucleotide precursor UDP-N-acetylmuramoyl-L-alanyl-D-glutamate (UMAG) in the biosynthesis of bacterial cell-wall peptidoglycan. The polypeptide is UDP-N-acetylmuramoyl-L-alanyl-D-glutamate--2,6-diaminopimelate ligase (Corynebacterium efficiens (strain DSM 44549 / YS-314 / AJ 12310 / JCM 11189 / NBRC 100395)).